Consider the following 429-residue polypeptide: SVP1-like protein 2 (429 aa).

WD repeat units follow at residues 10 to 48, 50 to 96, 178 to 218, and 223 to 262; these read PVLA…LRTS, DFGA…QVGV, AHTS…RLYE, and IDKA…GTRP. Positions 262–297 are disordered; sequence PITSNGGTAYAAGEPSVTGNNRPSSPYSVASSSGGG.

Belongs to the WD repeat PROPPIN family.

It is found in the vacuole membrane. The protein resides in the cytoplasmic vesicle membrane. Its function is as follows. Involved in mitochondrial or peroxisomal functions and amino acid signaling pathways. In Neurospora crassa (strain ATCC 24698 / 74-OR23-1A / CBS 708.71 / DSM 1257 / FGSC 987), this protein is SVP1-like protein 2 (apg-14).